The following is a 309-amino-acid chain: Nucleoside kinase (309 aa).

3 residues coordinate substrate: Asp16, Gly42, and Asn46. Gln108 provides a ligand contact to ATP. Substrate is bound by residues 110–112 and Gln166; that span reads SYF. ATP contacts are provided by residues Asn189 and 217–223; that span reads KTYGKEG. Asp249 contacts substrate. The active-site Proton acceptor is Asp249.

Belongs to the carbohydrate kinase PfkB family. As to quaternary structure, homodimer. The cofactor is Mg(2+).

Catalyzes the phosphorylation of a wide range of nucleosides to yield nucleoside monophosphates, using ATP, ITP or GTP as phosphate donor. The sequence is that of Nucleoside kinase from Methanothermobacter thermautotrophicus (strain ATCC 29096 / DSM 1053 / JCM 10044 / NBRC 100330 / Delta H) (Methanobacterium thermoautotrophicum).